An 871-amino-acid polypeptide reads, in one-letter code: Alanine--tRNA ligase (871 aa).

H561, H565, C665, and H669 together coordinate Zn(2+).

The protein belongs to the class-II aminoacyl-tRNA synthetase family. It depends on Zn(2+) as a cofactor.

The protein resides in the cytoplasm. It catalyses the reaction tRNA(Ala) + L-alanine + ATP = L-alanyl-tRNA(Ala) + AMP + diphosphate. Its function is as follows. Catalyzes the attachment of alanine to tRNA(Ala) in a two-step reaction: alanine is first activated by ATP to form Ala-AMP and then transferred to the acceptor end of tRNA(Ala). Also edits incorrectly charged Ser-tRNA(Ala) and Gly-tRNA(Ala) via its editing domain. The polypeptide is Alanine--tRNA ligase (Dehalococcoides mccartyi (strain ATCC BAA-2266 / KCTC 15142 / 195) (Dehalococcoides ethenogenes (strain 195))).